Here is a 67-residue protein sequence, read N- to C-terminus: ATP synthase F(0) complex subunit 8 (67 aa).

A helical membrane pass occupies residues 8–24 (TWFITIVSMLLSLFILM). Lysine 54 is subject to N6-acetyllysine; alternate. Lysine 54 carries the post-translational modification N6-succinyllysine; alternate. Lysine 57 is subject to N6-acetyllysine.

It belongs to the ATPase protein 8 family. Component of the ATP synthase complex composed at least of ATP5F1A/subunit alpha, ATP5F1B/subunit beta, ATP5MC1/subunit c (homooctomer), MT-ATP6/subunit a, MT-ATP8/subunit 8, ATP5ME/subunit e, ATP5MF/subunit f, ATP5MG/subunit g, ATP5MK/subunit k, ATP5MJ/subunit j, ATP5F1C/subunit gamma, ATP5F1D/subunit delta, ATP5F1E/subunit epsilon, ATP5PF/subunit F6, ATP5PB/subunit b, ATP5PD/subunit d, ATP5PO/subunit OSCP. ATP synthase complex consists of a soluble F(1) head domain (subunits alpha(3) and beta(3)) - the catalytic core - and a membrane F(0) domain - the membrane proton channel (subunits c, a, 8, e, f, g, k and j). These two domains are linked by a central stalk (subunits gamma, delta, and epsilon) rotating inside the F1 region and a stationary peripheral stalk (subunits F6, b, d, and OSCP). Interacts with PRICKLE3.

Its subcellular location is the mitochondrion membrane. Its function is as follows. Subunit 8, of the mitochondrial membrane ATP synthase complex (F(1)F(0) ATP synthase or Complex V) that produces ATP from ADP in the presence of a proton gradient across the membrane which is generated by electron transport complexes of the respiratory chain. ATP synthase complex consist of a soluble F(1) head domain - the catalytic core - and a membrane F(1) domain - the membrane proton channel. These two domains are linked by a central stalk rotating inside the F(1) region and a stationary peripheral stalk. During catalysis, ATP synthesis in the catalytic domain of F(1) is coupled via a rotary mechanism of the central stalk subunits to proton translocation. In vivo, can only synthesize ATP although its ATP hydrolase activity can be activated artificially in vitro. Part of the complex F(0) domain. The protein is ATP synthase F(0) complex subunit 8 of Dasypus novemcinctus (Nine-banded armadillo).